Reading from the N-terminus, the 3110-residue chain is Huntingtin (3110 aa).

Residues 1–58 form a disordered region; the sequence is MKAFESLKSFQQQQQQQQPPPQPPPPPPPPPQPPQPPPQGQPPPPPPLPGPAEEPLHR. Residue K2 is modified to N6-acetyllysine. Pro residues predominate over residues 18-52; sequence QPPPQPPPPPPPPPQPPQPPPQGQPPPPPPLPGPA. Residues K146 and K204 each carry the N6-acetyllysine modification. HEAT repeat units lie at residues 174 to 211 and 216 to 253; these read PYLV…SFGN and NEIK…HSRR. K313 is subject to N6-acetyllysine. S387, S389, and S402 each carry phosphoserine. K412 carries the N6-acetyllysine modification. Positions 462 to 473 are interaction with ZDHHC17; that stretch reads GHDIITEQPRSQ. The tract at residues 487-549 is disordered; sequence DLTSAATDGD…PDSAVTPSDS (63 aa). Residues 521–549 are compositionally biased toward polar residues; that stretch reads DGTQASSPISDSSQTTTEGPDSAVTPSDS. A lipid anchor (N-myristoyl glycine) is attached at G522. Residues S611 and S614 each carry the phosphoserine modification. HEAT repeat units follow at residues 773-810 and 873-911; these read FSLV…SLCS and KLQE…KLFY. Residues 1137–1195 are disordered; that stretch reads KAALPSLTNPPSLSPIRRKGKEKEPGEQTSTPMSPKKGGEASTASRQSDTSGPVTASKS. A compositionally biased stretch (low complexity) spans 1140-1151; the sequence is LPSLTNPPSLSP. Phosphoserine; by CDK5 occurs at positions 1150 and 1170. The span at 1178–1195 shows a compositional bias: polar residues; it reads STASRQSDTSGPVTASKS. Residues 1395-1432 form an HEAT 5 repeat; the sequence is LFEPLVIKALKQYTTTTSVQLQKQVLDLLAQLVQLRVN. Residue S1845 is modified to Phosphoserine. Residues 2363-2372 carry the Nuclear export signal motif; that stretch reads IVVSLARLPL. The interval 2601–2628 is disordered; sequence EEEWDEEEEEEADAPAPTSPPVSPVNSR. A compositionally biased stretch (acidic residues) spans 2602–2613; it reads EEWDEEEEEEAD.

Belongs to the huntingtin family. As to quaternary structure, interacts with PFN1. Interacts through its N-terminus with PRPF40A. Interacts with PQBP1. Interacts with SETD2. Interacts with SH3GLB1. Interacts with SYVN. Interacts with TPR; the interaction is inhibited by forms of Huntingtin with expanded polyglutamine stretch. Interacts with ZDHHC13 (via ANK repeats). Interacts with ZDHHC17 (via ANK repeats). Interacts with F8A1/F8A2/F8A3. Found in a complex with F8A1/F8A2/F8A3, HTT and RAB5A; mediates the recruitment of HTT by RAB5A. Post-translationally, phosphorylation at Ser-1150 and Ser-1170 by CDK5 in response to DNA damage in nuclei of neurons protects neurons against polyglutamine expansion as well as DNA damage mediated toxicity. Cleaved by caspases downstream of the polyglutamine stretch. In terms of processing, myristoylated at Gly-522, following proteolytic cleavage at Asp-521. Expressed to a high degree in all the regions of the brain of adults and in meiotic cells of the testis. In addition, very low levels are detected in various non-neuronal tissues (heart, muscle, liver, lung and kidney).

The protein localises to the cytoplasm. It localises to the nucleus. It is found in the cytoplasmic vesicle. Its subcellular location is the autophagosome. Functionally, may play a role in microtubule-mediated transport or vesicle function. Promotes the formation of autophagic vesicles. The polypeptide is Huntingtin (Htt) (Rattus norvegicus (Rat)).